The primary structure comprises 90 residues: Acylphosphatase (90 aa).

The Acylphosphatase-like domain occupies 5–90; sequence CVKASVKGIV…WRHIDGFEIK (86 aa). Residues Arg-20 and Asn-38 contribute to the active site.

This sequence belongs to the acylphosphatase family.

It catalyses the reaction an acyl phosphate + H2O = a carboxylate + phosphate + H(+). The protein is Acylphosphatase (acyP) of Photobacterium profundum (strain SS9).